The chain runs to 624 residues: 1-deoxy-D-xylulose-5-phosphate synthase (624 aa).

Residues H74 and 115–117 (GHS) contribute to the thiamine diphosphate site. Position 146 (D146) interacts with Mg(2+). Residues 147-148 (GA), N175, Y286, and E366 each bind thiamine diphosphate. Position 175 (N175) interacts with Mg(2+).

The protein belongs to the transketolase family. DXPS subfamily. As to quaternary structure, homodimer. The cofactor is Mg(2+). It depends on thiamine diphosphate as a cofactor.

The catalysed reaction is D-glyceraldehyde 3-phosphate + pyruvate + H(+) = 1-deoxy-D-xylulose 5-phosphate + CO2. Its pathway is metabolic intermediate biosynthesis; 1-deoxy-D-xylulose 5-phosphate biosynthesis; 1-deoxy-D-xylulose 5-phosphate from D-glyceraldehyde 3-phosphate and pyruvate: step 1/1. Functionally, catalyzes the acyloin condensation reaction between C atoms 2 and 3 of pyruvate and glyceraldehyde 3-phosphate to yield 1-deoxy-D-xylulose-5-phosphate (DXP). The chain is 1-deoxy-D-xylulose-5-phosphate synthase from Clostridium kluyveri (strain NBRC 12016).